The following is a 211-amino-acid chain: Wound-induced protein WIN2 (211 aa).

The N-terminal stretch at 1–25 is a signal peptide; it reads MVKLSCGPILLALVLCISLTSVANA. Residues 26–68 enclose the Chitin-binding type-1 domain; that stretch reads QQCGRQRGGALCGNNLCCSQFGWCGSTPEYCSPSQGCQSQCTG. 4 disulfides stabilise this stretch: cysteine 28–cysteine 43, cysteine 37–cysteine 49, cysteine 42–cysteine 56, and cysteine 62–cysteine 66. The Barwin domain maps to 77–198; that stretch reads GSAQNVRATY…VNYQFVNCGD (122 aa).

This chain is Wound-induced protein WIN2 (WIN2), found in Solanum tuberosum (Potato).